A 185-amino-acid polypeptide reads, in one-letter code: uncharacterized protein (185 aa).

The signal sequence occupies residues 1–24 (MPCNRAVFGAFVLALLISLQSVYF). Residues 50–70 (VAVNVIVEFSFDILFFLCGLL) traverse the membrane as a helical segment. The span at 96-113 (ELEHVSSRRRNDSRDDST) shows a compositional bias: basic and acidic residues. The tract at residues 96-185 (ELEHVSSRRR…LFTAGGIGLP (90 aa)) is disordered. Residues 114 to 126 (VRNVSKTSPLASQ) show a composition bias toward polar residues. Residues 127–138 (RSRDHFDGDPRE) show a composition bias toward basic and acidic residues. Over residues 139–155 (PAPPAYSPADFYPPPAS) the composition is skewed to pro residues.

The protein resides in the host membrane. This is an uncharacterized protein from Colorado tick fever virus (strain USA/Florio N-7180) (CTFV).